A 64-amino-acid polypeptide reads, in one-letter code: Sperm protamine P1 (64 aa).

The segment at Met-1–Tyr-64 is disordered.

The protein belongs to the protamine P1 family. In terms of tissue distribution, testis.

The protein resides in the nucleus. The protein localises to the chromosome. In terms of biological role, protamines substitute for histones in the chromatin of sperm during the haploid phase of spermatogenesis. They compact sperm DNA into a highly condensed, stable and inactive complex. The protein is Sperm protamine P1 (PRM1) of Hypsiprymnodon moschatus (Musky rat kangaroo).